We begin with the raw amino-acid sequence, 98 residues long: NADH-ubiquinone oxidoreductase chain 4L (98 aa).

Transmembrane regions (helical) follow at residues 1–21 (MPYIYMNITLAFVISLIGTLM), 29–49 (SLLCLEGMMLSLFTLNALLSL), and 61–81 (LILLVFAACEAAVGLALLVMI).

This sequence belongs to the complex I subunit 4L family. In terms of assembly, core subunit of respiratory chain NADH dehydrogenase (Complex I) which is composed of 45 different subunits.

It localises to the mitochondrion inner membrane. The catalysed reaction is a ubiquinone + NADH + 5 H(+)(in) = a ubiquinol + NAD(+) + 4 H(+)(out). Core subunit of the mitochondrial membrane respiratory chain NADH dehydrogenase (Complex I) which catalyzes electron transfer from NADH through the respiratory chain, using ubiquinone as an electron acceptor. Part of the enzyme membrane arm which is embedded in the lipid bilayer and involved in proton translocation. In Loxodonta africana (African elephant), this protein is NADH-ubiquinone oxidoreductase chain 4L (MT-ND4L).